A 100-amino-acid chain; its full sequence is Large ribosomal subunit protein uL23 (100 aa).

Belongs to the universal ribosomal protein uL23 family. As to quaternary structure, part of the 50S ribosomal subunit. Contacts protein L29, and trigger factor when it is bound to the ribosome.

In terms of biological role, one of the early assembly proteins it binds 23S rRNA. One of the proteins that surrounds the polypeptide exit tunnel on the outside of the ribosome. Forms the main docking site for trigger factor binding to the ribosome. This Prochlorococcus marinus (strain AS9601) protein is Large ribosomal subunit protein uL23.